Reading from the N-terminus, the 726-residue chain is Transferrin (726 aa).

A signal peptide spans 1–16 (MLLCLTLLFSASAVLA). Transferrin-like domains follow at residues 29–367 (YKVC…ERDT) and 374–719 (VRFC…VIRA). Cystine bridges form between Cys32–Cys63 and Cys41–Cys54. Fe(3+) is bound by residues Asp78 and Tyr111. Cystine bridges form between Cys135/Cys231, Cys184/Cys210, Cys207/Cys216, and Cys274/Cys287. Residues Thr137, Arg141, Val143, and Gly144 each coordinate hydrogencarbonate. Residue Asn162 is glycosylated (N-linked (GlcNAc...) asparagine). Position 225 (Tyr225) interacts with Fe(3+). N-linked (GlcNAc...) asparagine glycans are attached at residues Asn337 and Asn358. 2 disulfide bridges follow: Cys377–Cys414 and Cys387–Cys405. 2 residues coordinate Fe(3+): Asp429 and Tyr457. Cysteines 481 and 562 form a disulfide. Residues Thr483, Arg487, Ala489, and Gly490 each contribute to the hydrogencarbonate site. Tyr573 and His642 together coordinate Fe(3+).

The protein belongs to the transferrin family.

It localises to the secreted. Transferrins are iron binding transport proteins which bind Fe(3+) ion in association with the binding of an anion, usually bicarbonate. The sequence is that of Transferrin from Blaberus discoidalis (Tropical cockroach).